Reading from the N-terminus, the 474-residue chain is MMKLKKFQLHTPFAHSCNRVEIYTARFGPTPFSTKANNLKQPESTLNDHRTIAARQKLYTTSILTPGSIFFLPHGTRIYNRLVDFLRAQYQIHGFEEIITPLIFKKDLWEKSGHWQNYEKEIFRVEESRNVEDEHSNATYGLKPMNCPGHCIVYASTERSYKELPLRFADFSPLHRNEASGALSGLTRLRCFHQDDGHIFCSPESIKDEIKNTLTFVKQVYSLLGMNKLKLYLSTRPEEHIGSLDTWNEAENGLREALQESGETWIINEGDGAFYGPKIDVMVADARGKWHQTATIQLDFNLPQRFKLYYRTDAGDNAGSEKLIKQPVMIHRAIFGSLERFMGILIEHLNGHWPFWLSPRHAVILPVNQTDRILTYAKQVQKELSNQEVNESEFLPLNKNTYYVDINAEAQSIGKRLRESRLLNYNYEIVIGEDEVDKEILSVSSRHNHNSRDTRKMTIQQLKKEFIENVKAYR.

Residues 1–27 (MMKLKKFQLHTPFAHSCNRVEIYTARF) constitute a mitochondrion transit peptide.

It belongs to the class-II aminoacyl-tRNA synthetase family.

The protein resides in the mitochondrion matrix. It carries out the reaction tRNA(Thr) + L-threonine + ATP = L-threonyl-tRNA(Thr) + AMP + diphosphate + H(+). This chain is Probable threonine--tRNA ligase, mitochondrial, found in Schizosaccharomyces pombe (strain 972 / ATCC 24843) (Fission yeast).